The following is a 273-amino-acid chain: Putative phosphoenolpyruvate synthase regulatory protein (273 aa).

153–160 contributes to the ADP binding site; that stretch reads AVSRAGKT.

The protein belongs to the pyruvate, phosphate/water dikinase regulatory protein family. PSRP subfamily.

The enzyme catalyses [pyruvate, water dikinase] + ADP = [pyruvate, water dikinase]-phosphate + AMP + H(+). It carries out the reaction [pyruvate, water dikinase]-phosphate + phosphate + H(+) = [pyruvate, water dikinase] + diphosphate. In terms of biological role, bifunctional serine/threonine kinase and phosphorylase involved in the regulation of the phosphoenolpyruvate synthase (PEPS) by catalyzing its phosphorylation/dephosphorylation. This is Putative phosphoenolpyruvate synthase regulatory protein from Xanthomonas campestris pv. campestris (strain 8004).